The sequence spans 400 residues: Tryptophan synthase beta chain (400 aa).

The residue at position 92 (lysine 92) is an N6-(pyridoxal phosphate)lysine.

This sequence belongs to the TrpB family. Tetramer of two alpha and two beta chains. The cofactor is pyridoxal 5'-phosphate.

The catalysed reaction is (1S,2R)-1-C-(indol-3-yl)glycerol 3-phosphate + L-serine = D-glyceraldehyde 3-phosphate + L-tryptophan + H2O. The protein operates within amino-acid biosynthesis; L-tryptophan biosynthesis; L-tryptophan from chorismate: step 5/5. Its function is as follows. The beta subunit is responsible for the synthesis of L-tryptophan from indole and L-serine. This Neisseria gonorrhoeae (strain NCCP11945) protein is Tryptophan synthase beta chain.